The following is a 136-amino-acid chain: Large ribosomal subunit protein bL21 (136 aa).

The protein belongs to the bacterial ribosomal protein bL21 family. In terms of assembly, part of the 50S ribosomal subunit. Contacts protein L20.

Its function is as follows. This protein binds to 23S rRNA in the presence of protein L20. This chain is Large ribosomal subunit protein bL21, found in Trichodesmium erythraeum (strain IMS101).